A 352-amino-acid chain; its full sequence is Ion-translocating oxidoreductase complex subunit D (352 aa).

5 helical membrane-spanning segments follow: residues 20–40 (IMLLVLLAAVPGIAAQLWFFG), 42–62 (GTLVQILLASVSALLAEALVL), 78–109 (ALLTGLLLAVSIPPLAPWWMVVLGTVFAVIIA), 123–143 (PAMIGYVVLLISFPVQMTSWL), and 148–168 (IAVNIPGFIDAIQVIFSGHIT). Threonine 187 bears the FMN phosphoryl threonine mark. The next 5 membrane-spanning stretches (helical) occupy residues 215–235 (LAGVGWQWVNLAWLAGGVWLL), 242–262 (WHIPLSFLVTLALCATLGWLF), 267–287 (LAAPQIHLLSGATMLGAFFIL), 301–321 (LIFGALAGLLVWLIRSFGGYP), and 322–342 (DGVAFAVLLANITVPLIDYYT).

Belongs to the NqrB/RnfD family. The complex is composed of six subunits: RsxA, RsxB, RsxC, RsxD, RsxE and RsxG. It depends on FMN as a cofactor.

Its subcellular location is the cell inner membrane. Part of a membrane-bound complex that couples electron transfer with translocation of ions across the membrane. Required to maintain the reduced state of SoxR. In Escherichia coli (strain SMS-3-5 / SECEC), this protein is Ion-translocating oxidoreductase complex subunit D.